The primary structure comprises 102 residues: Urease subunit beta (102 aa).

This sequence belongs to the urease beta subunit family. Heterotrimer of UreA (gamma), UreB (beta) and UreC (alpha) subunits. Three heterotrimers associate to form the active enzyme.

It localises to the cytoplasm. It catalyses the reaction urea + 2 H2O + H(+) = hydrogencarbonate + 2 NH4(+). The protein operates within nitrogen metabolism; urea degradation; CO(2) and NH(3) from urea (urease route): step 1/1. The protein is Urease subunit beta of Trichodesmium erythraeum (strain IMS101).